We begin with the raw amino-acid sequence, 359 residues long: Peroxisome assembly protein 12 (359 aa).

Residues 1–19 (MAEHGAHFTAASVADDQPS) are Peroxisomal matrix-facing. The chain crosses the membrane as a helical span at residues 20–47 (IFEVVAQDSLMTAVRPALQHVVKVLAES). Over 48–51 (NPTH) the chain is Cytoplasmic. Residues 52–76 (YGFLWRWFDEIFTLLDLLLQQHYLS) traverse the membrane as a helical segment. Over 77–109 (RTSASFSENFYGLKRIVMGDTHKSQRLASAGLP) the chain is Peroxisomal matrix. A helical membrane pass occupies residues 110–139 (KQQLWKSIMFLVLLPYLKVKLEKLVSSLRE). Topologically, residues 140–144 (EDEYS) are cytoplasmic. A helical membrane pass occupies residues 145 to 183 (IHPPSSRWKRFYRAFLAAYPFVNMAWEGWFLVQQLRYIL). Over 184–249 (GKAQHHSPLL…VGGVALSLST (66 aa)) the chain is Peroxisomal matrix. A helical membrane pass occupies residues 250-277 (GLSVGVFFLQFLDWWYSSENQETIKSLT). Residues 278–359 (ALPTPPPPVH…HLIKLYSPEN (82 aa)) lie on the Cytoplasmic side of the membrane. Residues C304, C307, C325, and C328 each contribute to the Zn(2+) site. The RING-type; degenerate zinc-finger motif lies at 304 to 343 (CPLCRKTRVNDTVLATSGYVFCYRCVFHYVRSHQACPITG).

It belongs to the pex2/pex10/pex12 family. As to quaternary structure, component of the PEX2-PEX10-PEX12 retrotranslocation channel, composed of PEX2, PEX10 and PEX12. Interacts with PEX19 via its cytoplasmic domain.

It localises to the peroxisome membrane. Its pathway is protein modification; protein ubiquitination. Functionally, component of a retrotranslocation channel required for peroxisome organization by mediating export of the PEX5 receptor from peroxisomes to the cytosol, thereby promoting PEX5 recycling. The retrotranslocation channel is composed of PEX2, PEX10 and PEX12; each subunit contributing transmembrane segments that coassemble into an open channel that specifically allows the passage of PEX5 through the peroxisomal membrane. PEX12 also regulates PEX5 recycling by activating the E3 ubiquitin-protein ligase activity of PEX10. When PEX5 recycling is compromised, PEX12 stimulates PEX10-mediated polyubiquitination of PEX5, leading to its subsequent degradation. This is Peroxisome assembly protein 12 from Homo sapiens (Human).